A 178-amino-acid chain; its full sequence is ATP synthase subunit delta (178 aa).

It belongs to the ATPase delta chain family. F-type ATPases have 2 components, F(1) - the catalytic core - and F(0) - the membrane proton channel. F(1) has five subunits: alpha(3), beta(3), gamma(1), delta(1), epsilon(1). F(0) has three main subunits: a(1), b(2) and c(10-14). The alpha and beta chains form an alternating ring which encloses part of the gamma chain. F(1) is attached to F(0) by a central stalk formed by the gamma and epsilon chains, while a peripheral stalk is formed by the delta and b chains.

The protein resides in the cell membrane. In terms of biological role, f(1)F(0) ATP synthase produces ATP from ADP in the presence of a proton or sodium gradient. F-type ATPases consist of two structural domains, F(1) containing the extramembraneous catalytic core and F(0) containing the membrane proton channel, linked together by a central stalk and a peripheral stalk. During catalysis, ATP synthesis in the catalytic domain of F(1) is coupled via a rotary mechanism of the central stalk subunits to proton translocation. This protein is part of the stalk that links CF(0) to CF(1). It either transmits conformational changes from CF(0) to CF(1) or is implicated in proton conduction. This is ATP synthase subunit delta from Streptococcus pyogenes serotype M1.